Here is a 349-residue protein sequence, read N- to C-terminus: Decapping nuclease RAI1 (349 aa).

Residue Glu-157 coordinates a divalent metal cation. Glu-205 is a binding site for substrate. The a divalent metal cation site is built by Asp-207, Glu-222, and Leu-223. Lys-224 and Gln-248 together coordinate substrate.

The protein belongs to the DXO/Dom3Z family. Interacts with RAT1; the interaction is direct, stabilizes RAT1 protein structure and stimulates its exoribonuclease activity. The interaction also stimulates RAI1 pyrophosphohydrolase activity, probably by recruiting it to mRNA substrates. A divalent metal cation is required as a cofactor.

The protein resides in the nucleus. It catalyses the reaction a 5'-end NAD(+)-phospho-ribonucleoside in mRNA + H2O = a 5'-end phospho-ribonucleoside in mRNA + NAD(+) + H(+). The catalysed reaction is a 5'-end (N(7)-methyl 5'-triphosphoguanosine)-ribonucleoside-ribonucleotide in mRNA + H2O = a (N(7)-methyl 5'-triphosphoguanosine)-nucleoside + a 5'-end phospho-ribonucleoside in mRNA + H(+). It carries out the reaction a 5'-end triphospho-ribonucleoside in mRNA + H2O = a 5'-end phospho-ribonucleoside in mRNA + diphosphate + H(+). Decapping enzyme for NAD-capped RNAs: specifically hydrolyzes the nicotinamide adenine dinucleotide (NAD) cap from a subset of RNAs by removing the entire NAD moiety from the 5'-end of an NAD-capped RNA. The NAD-cap is present at the 5'-end of some RNAs and snoRNAs. In contrast to the canonical 5'-end N7 methylguanosine (m7G) cap, the NAD cap promotes mRNA decay. Also acts as a non-canonical decapping enzyme that removes the entire cap structure of m7G capped or incompletely capped RNAs. Has decapping activity toward incomplete 5'-end m7G cap mRNAs such as unmethylated 5'-end-capped RNA (cap0), while it has no activity toward 2'-O-ribose methylated m7G cap (cap1). Also possesses RNA 5'-pyrophosphohydrolase activity by hydrolyzing the 5'-end triphosphate to release pyrophosphates. Stimulates exoribonuclease activity of Rat1, allowing it to degrade RNAs with stable secondary structure more effectively. The protein is Decapping nuclease RAI1 (RAI1) of Yarrowia lipolytica (strain CLIB 122 / E 150) (Yeast).